We begin with the raw amino-acid sequence, 449 residues long: Sulfite exporter TauE/SafE family protein 5 (449 aa).

Transmembrane regions (helical) follow at residues 1 to 21, 57 to 77, 78 to 98, 101 to 121, 127 to 147, 150 to 170, 224 to 244, 259 to 279, 315 to 335, 353 to 373, 378 to 398, and 409 to 429; these read MKTLFVLFLLLLCVFAINANQ, AIIMAGVLCFLAALISSAGGI, GGGGLFIPIMTIVAGVDLKTA, FSAFMVTGGSIANVISNLFGG, YDLALLLEPCMLLGVSIGVIC, VLPEWLITVLFAVFLAWSSLK, IPWTKLGVLVIVWASFFVIYL, PCGVEYWILLSLQIPLALIFT, AMSFLAGLLGGIFGIGGGMLI, TSFMVFFSATMSAVQYLLLGM, TAYVFSFICFLASLLGLVLVQ, and IIVFSVGTVMSLSTVLMTSFG.

This sequence belongs to the 4-toluene sulfonate uptake permease (TSUP) (TC 2.A.102) family.

It localises to the membrane. The chain is Sulfite exporter TauE/SafE family protein 5 from Arabidopsis thaliana (Mouse-ear cress).